The following is a 488-amino-acid chain: Bifunctional protein HldE (488 aa).

Residues 1–331 (MTELSALVER…VALHREDLTL (331 aa)) are ribokinase. 206–209 (NRKE) is an ATP binding site. The active site involves Asp-276. The interval 358–488 (FTNGCFDLLH…TNTIKKMNGN (131 aa)) is cytidylyltransferase.

The protein in the N-terminal section; belongs to the carbohydrate kinase PfkB family. This sequence in the C-terminal section; belongs to the cytidylyltransferase family. As to quaternary structure, homodimer.

The catalysed reaction is D-glycero-beta-D-manno-heptose 7-phosphate + ATP = D-glycero-beta-D-manno-heptose 1,7-bisphosphate + ADP + H(+). It carries out the reaction D-glycero-beta-D-manno-heptose 1-phosphate + ATP + H(+) = ADP-D-glycero-beta-D-manno-heptose + diphosphate. Its pathway is nucleotide-sugar biosynthesis; ADP-L-glycero-beta-D-manno-heptose biosynthesis; ADP-L-glycero-beta-D-manno-heptose from D-glycero-beta-D-manno-heptose 7-phosphate: step 1/4. It participates in nucleotide-sugar biosynthesis; ADP-L-glycero-beta-D-manno-heptose biosynthesis; ADP-L-glycero-beta-D-manno-heptose from D-glycero-beta-D-manno-heptose 7-phosphate: step 3/4. Catalyzes the phosphorylation of D-glycero-D-manno-heptose 7-phosphate at the C-1 position to selectively form D-glycero-beta-D-manno-heptose-1,7-bisphosphate. Functionally, catalyzes the ADP transfer from ATP to D-glycero-beta-D-manno-heptose 1-phosphate, yielding ADP-D-glycero-beta-D-manno-heptose. The sequence is that of Bifunctional protein HldE from Paramagnetospirillum magneticum (strain ATCC 700264 / AMB-1) (Magnetospirillum magneticum).